The following is a 55-amino-acid chain: Cytochrome b-c1 complex subunit 9 (55 aa).

At 1 to 15 (MKVIYNTLFKRTSTY) the chain is on the mitochondrial matrix side. Residues 16–41 (AVAIIASAFFFERALDVTSVAIFEGI) form a helical membrane-spanning segment. Residues 42 to 55 (NKGKLWKDIKGKYE) are Chloroplast intermembrane-facing.

It belongs to the UQCR10/QCR9 family. In terms of assembly, component of the ubiquinol-cytochrome c oxidoreductase (cytochrome b-c1 complex, complex III, CIII), a multisubunit enzyme composed of 3 respiratory subunits cytochrome b, cytochrome c1 and Rieske protein, 2 core protein subunits, and additional low-molecular weight protein subunits. The complex exists as an obligatory dimer and forms supercomplexes (SCs) in the inner mitochondrial membrane with cytochrome c oxidase (complex IV, CIV).

The protein resides in the mitochondrion inner membrane. Component of the ubiquinol-cytochrome c oxidoreductase, a multisubunit transmembrane complex that is part of the mitochondrial electron transport chain which drives oxidative phosphorylation. The respiratory chain contains 3 multisubunit complexes succinate dehydrogenase (complex II, CII), ubiquinol-cytochrome c oxidoreductase (cytochrome b-c1 complex, complex III, CIII) and cytochrome c oxidase (complex IV, CIV), that cooperate to transfer electrons derived from NADH and succinate to molecular oxygen, creating an electrochemical gradient over the inner membrane that drives transmembrane transport and the ATP synthase. The cytochrome b-c1 complex catalyzes electron transfer from ubiquinol to cytochrome c, linking this redox reaction to translocation of protons across the mitochondrial inner membrane, with protons being carried across the membrane as hydrogens on the quinol. In the process called Q cycle, 2 protons are consumed from the matrix, 4 protons are released into the intermembrane space and 2 electrons are passed to cytochrome c. This is Cytochrome b-c1 complex subunit 9 (ox) from Drosophila melanogaster (Fruit fly).